A 197-amino-acid polypeptide reads, in one-letter code: Probable 26S proteasome non-ATPase regulatory subunit 9 (197 aa).

The PDZ domain maps to 75–166 (KIVVEMENEN…KIIRVTVIRE (92 aa)).

Belongs to the proteasome subunit p27 family.

Acts as a chaperone during the assembly of the 26S proteasome, specifically of the base subcomplex of the 19S regulatory complex (RC). The protein is Probable 26S proteasome non-ATPase regulatory subunit 9 (psmd-9) of Caenorhabditis elegans.